The chain runs to 438 residues: Fumarate hydratase class II (438 aa).

Substrate is bound by residues 76-78 (SGT), 101-104 (HPND), 111-113 (SSN), and T159. H160 serves as the catalytic Proton donor/acceptor. The active site involves S291. Substrate contacts are provided by residues S292 and 297–299 (KTN).

The protein belongs to the class-II fumarase/aspartase family. Fumarase subfamily. Homotetramer.

It is found in the cytoplasm. It catalyses the reaction (S)-malate = fumarate + H2O. It functions in the pathway carbohydrate metabolism; tricarboxylic acid cycle; (S)-malate from fumarate: step 1/1. Involved in the TCA cycle. Catalyzes the stereospecific interconversion of fumarate to L-malate. In Saccharolobus solfataricus (strain ATCC 35092 / DSM 1617 / JCM 11322 / P2) (Sulfolobus solfataricus), this protein is Fumarate hydratase class II.